The primary structure comprises 353 residues: Phospho-N-acetylmuramoyl-pentapeptide-transferase (353 aa).

The next 10 helical transmembrane spans lie at 24-44 (LGFFIAFFLTLFLMPKFILWA), 66-86 (TPTMGGIVFVFATIVASVLCA), 88-108 (LSNLYVLLGIIVLVGFSFVGF), 129-149 (FGMLFILSLIVSVLLSLKGLD), 160-180 (PLFEMPTMLAVGFWVLVFLST), 192-212 (GLASVPSIFTLLSLSIFVYVA), 229-249 (VGELFVISLALVGSLFGFLWY), 256-276 (VFMGDSGSLAIGGFIAYNAIV), 281-301 (ILLVLMGSIFVIETLSVILQV), and 330-350 (KVIVRFWIISMLSNLVALLSL).

The protein belongs to the glycosyltransferase 4 family. MraY subfamily. Mg(2+) is required as a cofactor.

It is found in the cell inner membrane. It carries out the reaction UDP-N-acetyl-alpha-D-muramoyl-L-alanyl-gamma-D-glutamyl-meso-2,6-diaminopimeloyl-D-alanyl-D-alanine + di-trans,octa-cis-undecaprenyl phosphate = di-trans,octa-cis-undecaprenyl diphospho-N-acetyl-alpha-D-muramoyl-L-alanyl-D-glutamyl-meso-2,6-diaminopimeloyl-D-alanyl-D-alanine + UMP. Its pathway is cell wall biogenesis; peptidoglycan biosynthesis. Functionally, catalyzes the initial step of the lipid cycle reactions in the biosynthesis of the cell wall peptidoglycan: transfers peptidoglycan precursor phospho-MurNAc-pentapeptide from UDP-MurNAc-pentapeptide onto the lipid carrier undecaprenyl phosphate, yielding undecaprenyl-pyrophosphoryl-MurNAc-pentapeptide, known as lipid I. This Helicobacter pylori (strain J99 / ATCC 700824) (Campylobacter pylori J99) protein is Phospho-N-acetylmuramoyl-pentapeptide-transferase.